The sequence spans 163 residues: Nucleotide-binding protein BSU11020 (163 aa).

This sequence belongs to the YajQ family.

Nucleotide-binding protein. This chain is Nucleotide-binding protein BSU11020 (yitK), found in Bacillus subtilis (strain 168).